The chain runs to 272 residues: Transcription factor E2F6 (272 aa).

The binding to corepressors stretch occupies residues 1 to 62 (MSQQRTARRQ…MRKALKVKRP (62 aa)). The DNA-binding element occupies 50-129 (YVSMRKALKV…SKNHIRWIGS (80 aa)). Residues 95-129 (KLGVRKRRVYDITNVLDGIELVEKKSKNHIRWIGS) carry the DEF box motif. Residues 130-222 (DLNNFGAAPQ…PAPREDSITV (93 aa)) are dimerization. The leucine-zipper stretch occupies residues 143-164 (LQAELSDLSAMEDALDELIKDC). The interval 173–272 (DDKENERLAY…CPEKEDEPPQ (100 aa)) is transcription repression. The disordered stretch occupies residues 242-272 (HSNGKTNDGIGASPSKSSHPQCPEKEDEPPQ).

It belongs to the E2F/DP family. As to quaternary structure, forms heterodimers with DP family members TFDP1 or TFDP2. Component of the DRTF1/E2F transcription factor complex. Part of the E2F6.com-1 complex in G0 phase composed of E2F6, MGA, MAX, TFDP1, CBX3, BAT8, EUHMTASE1, RING1, RNF2, MBLR, L3MBTL2 and YAF2. Component of some MLL1/MLL complex, at least composed of the core components KMT2A/MLL1, ASH2L, HCFC1/HCF1, WDR5 and RBBP5, as well as the facultative components BACC1, CHD8, E2F6, HSP70, INO80C, KANSL1, LAS1L, MAX, MCRS1, MGA, KAT8/MOF, PELP1, PHF20, PRP31, RING2, RUVB1/TIP49A, RUVB2/TIP49B, SENP3, TAF1, TAF4, TAF6, TAF7, TAF9 and TEX10.

The protein localises to the nucleus. Functionally, inhibitor of E2F-dependent transcription. Binds DNA cooperatively with DP proteins through the E2 recognition site, 5'-TTTC[CG]CGC-3'. Has a preference for the 5'-TTTCCCGC-3' E2F recognition site. E2F6 lacks the transcriptional activation and pocket protein binding domains. Appears to regulate a subset of E2F-dependent genes whose products are required for entry into the cell cycle but not for normal cell cycle progression. Represses expression of some meiosis-specific genes, including SLC25A31/ANT4. May silence expression via the recruitment of a chromatin remodeling complex containing histone H3-K9 methyltransferase activity. Overexpression delays the exit of cells from the S-phase. The chain is Transcription factor E2F6 from Mus musculus (Mouse).